We begin with the raw amino-acid sequence, 82 residues long: Small ribosomal subunit protein eS17 (82 aa).

It belongs to the eukaryotic ribosomal protein eS17 family.

The polypeptide is Small ribosomal subunit protein eS17 (Sulfolobus acidocaldarius (strain ATCC 33909 / DSM 639 / JCM 8929 / NBRC 15157 / NCIMB 11770)).